Consider the following 217-residue polypeptide: Ras-related protein Rab-39A (217 aa).

S17, G20, K21, S22, C23, and T44 together coordinate GTP. S22 contributes to the Mg(2+) binding site. The interval 39 to 47 is switch-I; that stretch reads PACDPTVGV. T44 and D68 together coordinate Mg(2+). GTP is bound by residues G71, H127, K128, D130, A158, and K159. Positions 71 to 87 are switch-II; it reads GQERFRSITRSYYRNSV. Residues C215 and C217 are each lipidated (S-geranylgeranyl cysteine). The residue at position 217 (C217) is a Cysteine methyl ester.

This sequence belongs to the small GTPase superfamily. Rab family. In terms of assembly, interacts (GDP-bound) with C9orf72; C9orf72 acts as a GEF for RAB39A. Interacts (GTP-bound) with HOPS complex components VPS39 and VPS41, and STX17; interaction between HOPS components and RAB39A contributes to obtaining a functional HOPS complex that promotes membrane fusion driven by STX17-SNAP29-VAMP8. Interacts with BECN1. Probably associates with the PI3K (PI3KC3/PI3K-III/class III phosphatidylinositol 3-kinase) complex. Interacts with UACA. Interacts with isoform a of RASSF1. Does not interact with isoform c of RASSF1. Mg(2+) is required as a cofactor. Prenylated. Prenylation is required for association with cellular membranes.

It is found in the cell membrane. The protein localises to the cytoplasmic vesicle. It localises to the phagosome membrane. The protein resides in the late endosome membrane. Its subcellular location is the lysosome membrane. It is found in the autolysosome membrane. The catalysed reaction is GTP + H2O = GDP + phosphate + H(+). Its activity is regulated as follows. Regulated by guanine nucleotide exchange factors (GEFs) including c9Orf72, which promote the exchange of bound GDP for free GTP. Regulated by GTPase activating proteins (GAPs) which increase the GTP hydrolysis activity. Inhibited by GDP dissociation inhibitors (GDIs). Its function is as follows. The small GTPases Rab are key regulators of intracellular membrane trafficking, from the formation of transport vesicles to their fusion with membranes. Rabs cycle between an inactive GDP-bound form and an active GTP-bound form that is able to recruit to membranes different sets of downstream effectors directly responsible for vesicle formation, movement, tethering and fusion. RAB39A regulates autophagosome-lysosome fusion via recruitment of the HOPS endosomal tethering complex onto lysosomes; this process involves lysosomal RAB39A and autophagosomal RAB2A recruitment of HOPS subcomplexes VPS41-VPS16-VPS18-VPS33A and VPS39-VPS11, respectively, which assemble into a functional complex to mediate membrane tethering and SNAREs-driven membrane fusion. Also negatively regulates lipopolysaccharide (LPS)-induced autophagosome formation in macrophages, possibly by implicating PI3K. Promotes the delivery of MHC-I molecules from the ER to phagosomes and the generation of peptide-loaded MHC-I complexes in phagosomes, thus enhancing antigen cross-presentation by dendritic cells. Plays a role in the maturation and acidification of phagosomes that engulf pathogens, such as S.aureus and M.tuberculosis. Plays a role in the fusion of phagosomes with lysosomes. May be involved in multiple neurite formation. The protein is Ras-related protein Rab-39A of Mus musculus (Mouse).